Reading from the N-terminus, the 417-residue chain is Alpha-ionylideneethane synthase aba3 (417 aa).

Belongs to the alpha-ionylideneethane synthase family.

It participates in hormone biosynthesis. In terms of biological role, alpha-ionylideneethane synthase; part of the gene cluster that mediates the biosynthesis of abscisic acid (ABA), a phytohormone that acts antagonistically toward salicylic acid (SA), jasmonic acid (JA) and ethylene (ETH) signaling, to impede plant defense responses. The first step of the pathway catalyzes the reaction from farnesyl diphosphate to alpha-ionylideneethane performed by the alpha-ionylideneethane synthase aba3 via a three-step reaction mechanism involving 2 neutral intermediates, beta-farnesene and allofarnesene. The cytochrome P450 monooxygenase aba1 might then be involved in the conversion of alpha-ionylideneethane to alpha-ionylideneacetic acid. Alpha-ionylideneacetic acid is further converted to abscisic acid in 2 steps involving the cytochrome P450 monooxygenase aba2 and the short-chain dehydrogenase/reductase aba4, via the intermediates 1'-deoxy-ABA or 1',4'-trans-diol-ABA, depending on the order of action of these 2 enzymes. Aba2 is responsible for the hydroxylation of carbon atom C-1' and aba4 might be involved in the oxidation of the C-4' carbon atom. This Botryotinia fuckeliana (Noble rot fungus) protein is Alpha-ionylideneethane synthase aba3.